Here is a 97-residue protein sequence, read N- to C-terminus: Citrate lyase acyl carrier protein (97 aa).

Ser14 carries the post-translational modification O-(phosphoribosyl dephospho-coenzyme A)serine.

Belongs to the CitD family. In terms of assembly, oligomer with a subunit composition of (alpha,beta,gamma)6.

Its subcellular location is the cytoplasm. Covalent carrier of the coenzyme of citrate lyase. This is Citrate lyase acyl carrier protein from Klebsiella pneumoniae subsp. pneumoniae (strain ATCC 700721 / MGH 78578).